The sequence spans 432 residues: Pachytene checkpoint protein 2 homolog (432 aa).

Residue Met-1 is modified to N-acetylmethionine. Residue 179 to 186 (GPPGTGKT) participates in ATP binding.

This sequence belongs to the AAA ATPase family. PCH2 subfamily. As to quaternary structure, specifically interacts with the ligand binding domain of the thyroid receptor (TR). This interaction does not require the presence of thyroid hormone for its interaction. Interacts with proteasome subunit PSMA8; to participate in meiosis progression during spermatogenesis.

Plays a key role in chromosome recombination and chromosome structure development during meiosis. Required at early steps in meiotic recombination that leads to non-crossovers pathways. Also needed for efficient completion of homologous synapsis by influencing crossover distribution along the chromosomes affecting both crossovers and non-crossovers pathways. Also required for development of higher-order chromosome structures and is needed for synaptonemal-complex formation. In males, required for efficient synapsis of the sex chromosomes and for sex body formation. Promotes early steps of the DNA double-strand breaks (DSBs) repair process upstream of the assembly of RAD51 complexes. Required for depletion of HORMAD1 and HORMAD2 from synapsed chromosomes. This is Pachytene checkpoint protein 2 homolog (TRIP13) from Canis lupus familiaris (Dog).